Consider the following 277-residue polypeptide: Sulfate transport system permease protein CysT (277 aa).

The next 7 helical transmembrane spans lie at 17–37 (LGTS…ALVM), 64–84 (LLAA…MAWI), 99–119 (LMDL…ASLF), 136–156 (VTYT…PFVV), 188–205 (VVLP…ALSF), 215–235 (VIFI…MIFV), and 243–263 (PAAS…LFSI). The ABC transmembrane type-1 domain maps to 60–263 (YKVTLLAAFV…AASLLLLFSI (204 aa)).

It belongs to the binding-protein-dependent transport system permease family. CysTW subfamily. In terms of assembly, the complex is composed of two ATP-binding proteins (CysA), two transmembrane proteins (CysT and CysW) and a solute-binding protein (CysP).

It localises to the cell inner membrane. Functionally, part of the ABC transporter complex CysAWTP (TC 3.A.1.6.1) involved in sulfate/thiosulfate import. Probably responsible for the translocation of the substrate across the membrane. The protein is Sulfate transport system permease protein CysT (cysU) of Salmonella typhimurium (strain LT2 / SGSC1412 / ATCC 700720).